Here is a 313-residue protein sequence, read N- to C-terminus: MDKQSKIILISGPTASGKSNFAVKIAKKIEGEIINADSMQVYKKLKILTARPNKQEQKNIKHHLYGFVDLNEKFSTGQWLELTIKKIENIQKKKKIPILVGGTGLYFQSLINGLVKIPEIPLKFRNKVRLMSKKEGQKKFYKKLLKLDPKIKDKFDPNDTQRSIRAYEIKSYTNISMYDWLAKTKSEFNDSDFLKLHIDTKREKLVEKINLRTSSMLNNGAISEVKKFLKLKIKKDQSVNKVIGIAELTQYLNDEITLDEAEELISIKTRQYAKRQATWARTRMTSWIKVDPIKLDGYIKKLKKSSLKLDQLT.

Residue 12–19 (GPTASGKS) participates in ATP binding. Substrate is bound at residue 14 to 19 (TASGKS). 2 interaction with substrate tRNA regions span residues 37 to 40 (DSMQ) and 161 to 165 (QRSIR).

It belongs to the IPP transferase family. In terms of assembly, monomer. The cofactor is Mg(2+).

It catalyses the reaction adenosine(37) in tRNA + dimethylallyl diphosphate = N(6)-dimethylallyladenosine(37) in tRNA + diphosphate. In terms of biological role, catalyzes the transfer of a dimethylallyl group onto the adenine at position 37 in tRNAs that read codons beginning with uridine, leading to the formation of N6-(dimethylallyl)adenosine (i(6)A). In Pelagibacter ubique (strain HTCC1062), this protein is tRNA dimethylallyltransferase.